The primary structure comprises 314 residues: Ecto-ADP-ribosyltransferase 4 (314 aa).

A signal peptide spans 1-46 (MGPLINRCKKILLPTTVPPATMRIWLLGGLLPFLLLLSGLQRPTEG). Cystine bridges form between Cys-69/Cys-280 and Cys-182/Cys-231. The region spanning 91–276 (KNYFRMWQKA…LQLRSTGNLS (186 aa)) is the TR mART core domain. An N-linked (GlcNAc...) asparagine glycan is attached at Asn-114. Tyr-126 contacts NAD(+). Residue Asn-178 is glycosylated (N-linked (GlcNAc...) asparagine). Gln-206 contacts NAD(+). Asn-222 carries an N-linked (GlcNAc...) asparagine glycan. Ser-240 is a binding site for NAD(+). Residues Asn-257 and Asn-274 are each glycosylated (N-linked (GlcNAc...) asparagine). Ala-285 carries GPI-anchor amidated alanine lipidation. The propeptide at 286-314 (SSKKCIPDPIAIASLSFLTSVIIFSKSRV) is removed in mature form.

This sequence belongs to the Arg-specific ADP-ribosyltransferase family. Expressed in spleen and T-cells.

The protein localises to the cell membrane. It carries out the reaction L-arginyl-[protein] + NAD(+) = N(omega)-(ADP-D-ribosyl)-L-arginyl-[protein] + nicotinamide + H(+). This chain is Ecto-ADP-ribosyltransferase 4 (ART4), found in Homo sapiens (Human).